The following is a 282-amino-acid chain: MQIVNISAYKFVSLDDIETLRPAMRERCEAAGLKGTILLAPEGINLFLAGPREAIDGFMAWLHADARFADIAPKESLSENQPFKRMLVRAKKEIITMKMPLIRPEAGRAPSVRPADLKRWLDQGHDDEGRPVVMLDTRNDFEVAVGTFENAVEYDIAKFSEFPDAVAAHKAELDGKTVVSFCTGGIRCEKAAIHMQEVGIERVYQLEGGILKYFEEVGGSHYRGDCFVFDYRTALNPSLEPAGPKQCFACRAVVTPEQQQSPHYVVGKSCPHCIGGKDRAAA.

Residues 128–222 form the Rhodanese domain; it reads EGRPVVMLDT…YFEEVGGSHY (95 aa). Cys182 serves as the catalytic Cysteine persulfide intermediate.

It belongs to the TrhO family.

The catalysed reaction is uridine(34) in tRNA + AH2 + O2 = 5-hydroxyuridine(34) in tRNA + A + H2O. Its function is as follows. Catalyzes oxygen-dependent 5-hydroxyuridine (ho5U) modification at position 34 in tRNAs. The chain is tRNA uridine(34) hydroxylase from Cupriavidus taiwanensis (strain DSM 17343 / BCRC 17206 / CCUG 44338 / CIP 107171 / LMG 19424 / R1) (Ralstonia taiwanensis (strain LMG 19424)).